The chain runs to 259 residues: Proteasome subunit alpha (259 aa).

This sequence belongs to the peptidase T1A family. As to quaternary structure, the 20S proteasome core is composed of 14 alpha and 14 beta subunits that assemble into four stacked heptameric rings, resulting in a barrel-shaped structure. The two inner rings, each composed of seven catalytic beta subunits, are sandwiched by two outer rings, each composed of seven alpha subunits. The catalytic chamber with the active sites is on the inside of the barrel. Has a gated structure, the ends of the cylinder being occluded by the N-termini of the alpha-subunits. Is capped at one or both ends by the proteasome regulatory ATPase, PAN.

The protein localises to the cytoplasm. The formation of the proteasomal ATPase PAN-20S proteasome complex, via the docking of the C-termini of PAN into the intersubunit pockets in the alpha-rings, triggers opening of the gate for substrate entry. Interconversion between the open-gate and close-gate conformations leads to a dynamic regulation of the 20S proteasome proteolysis activity. In terms of biological role, component of the proteasome core, a large protease complex with broad specificity involved in protein degradation. This Methanococcus maripaludis (strain C7 / ATCC BAA-1331) protein is Proteasome subunit alpha.